The following is a 184-amino-acid chain: Ribosome-recycling factor (184 aa).

This sequence belongs to the RRF family.

The protein resides in the cytoplasm. Responsible for the release of ribosomes from messenger RNA at the termination of protein biosynthesis. May increase the efficiency of translation by recycling ribosomes from one round of translation to another. The chain is Ribosome-recycling factor from Bifidobacterium adolescentis (strain ATCC 15703 / DSM 20083 / NCTC 11814 / E194a).